A 77-amino-acid chain; its full sequence is Subtilisin-chymotrypsin inhibitor CI-1C (77 aa).

Belongs to the protease inhibitor I13 (potato type I serine protease inhibitor) family.

In terms of biological role, inhibits both subtilisin and chymotrypsin. This Hordeum vulgare (Barley) protein is Subtilisin-chymotrypsin inhibitor CI-1C.